A 186-amino-acid polypeptide reads, in one-letter code: Peptide deformylase (186 aa).

The Fe cation site is built by C99 and H141. E142 is an active-site residue. H145 lines the Fe cation pocket.

The protein belongs to the polypeptide deformylase family. The cofactor is Fe(2+).

It catalyses the reaction N-terminal N-formyl-L-methionyl-[peptide] + H2O = N-terminal L-methionyl-[peptide] + formate. Functionally, removes the formyl group from the N-terminal Met of newly synthesized proteins. Requires at least a dipeptide for an efficient rate of reaction. N-terminal L-methionine is a prerequisite for activity but the enzyme has broad specificity at other positions. The polypeptide is Peptide deformylase (Chlamydia felis (strain Fe/C-56) (Chlamydophila felis)).